A 572-amino-acid polypeptide reads, in one-letter code: MRPIPYDISLSITSFLSLILICSANPIDNGLVDSELIHECVTHKAVEVILLLDASGSIGDDTFKKQLSFAMHLASRLNISEDGSHMALIQYAETPKLEFSLGQFNHPTQLEWAIQRIEYQSGATNTGQALRLTLEKGLQGARPGIPKVAIVITDGQSQDDVSEPSQLLRDADVMVYAIGVTNLVNVHQLHQMTGNPVRVFTVESFEQLDRALADSLTWSMCKTEFRPGTPEIICGPDRIGVKASTKQPFEGNVFVMDHYHDEECRAGPEKFPDSRSIGLTVPFSACNVHRYRSLNPKGIFVEVSIVFMFHSLFMTKTDQTVKVQCFYMEADKHVTVPLSVSMITTVFREQIYQMPQCAYTLRKGAPDGPIVRFATLGESVYHRWECIEVEGADKDTFGMLVHSCYVDNGYGDRVDILDSNGCGLDAVLLSTPDYDTSLRLATKPYHVFKYADRPVLQFQCQITLCLKYDGGCEGITPPQNCKKLPGEDGHHHHHHPEKRRKLVRRLADGVGTIDVFTDSVTVLEQEPACQQPLPYPLINTNLWIMGIITLTNIFVFILTVWFTFRKRRCKPA.

An N-terminal signal peptide occupies residues 1 to 24; sequence MRPIPYDISLSITSFLSLILICSA. Residues 25-541 lie on the Extracellular side of the membrane; it reads NPIDNGLVDS…PLPYPLINTN (517 aa). In terms of domain architecture, VWFA spans 47–216; it reads EVILLLDASG…QLDRALADSL (170 aa). The N-linked (GlcNAc...) asparagine glycan is linked to N78. The ZP domain maps to 233 to 479; that stretch reads ICGPDRIGVK…GGCEGITPPQ (247 aa). Residues 542–562 form a helical membrane-spanning segment; the sequence is LWIMGIITLTNIFVFILTVWF. Over 563-572 the chain is Cytoplasmic; the sequence is TFRKRRCKPA.

It is found in the cell membrane. Its function is as follows. Plays a role in alae formation in dauer larvae probably by regulating cuticle assembly. The polypeptide is Cuticlin-6 (Caenorhabditis elegans).